Reading from the N-terminus, the 723-residue chain is Calpastatin (723 aa).

2 disordered regions span residues 1 to 402 (MNPT…PGRC) and 422 to 509 (STHS…LPPL). A compositionally biased stretch (basic residues) spans 21–30 (PNKKRHKKQA). A Glycyl lysine isopeptide (Lys-Gly) (interchain with G-Cter in SUMO2) cross-link involves residue Lys32. The segment covering 46–84 (VVHEKKTQEVKPKEHTEPKSQPKHPSDTRSKHAPKEKAV) has biased composition (basic and acidic residues). Lys50 is modified (N6-acetyllysine). Low complexity-rich tracts occupy residues 85-94 (SKSSEQPPSE) and 113-125 (SAVP…ASAE). Residue Ser87 is modified to Phosphoserine. Thr137 is subject to Phosphothreonine. Positions 157 to 173 (TALDDLIDTLGEPEETK) are enriched in acidic residues. One copy of the Inhibitory domain 1 repeat lies at 171–224 (ETKEDTTTYTGPEVSDPMSSTYIEELGKREVTLPPKYRELLNKEEGIAGPPPDS). Residues 195–216 (ELGKREVTLPPKYRELLNKEEG) are compositionally biased toward basic and acidic residues. Phosphoserine is present on residues Ser224 and Ser245. 2 stretches are compositionally biased toward basic and acidic residues: residues 249–263 (DAKK…EEAL) and 306–367 (PRPE…KPLS). The Inhibitory domain 2 repeat unit spans residues 307 to 359 (RPELDPSSIKEVDEAKAKEEKVKKCGEDEERVPSEYRLKPATDKDGKPLLPEA). A phosphoserine mark is found at Ser367, Ser369, and Ser376. A compositionally biased stretch (basic and acidic residues) spans 378–396 (DFDRSKCKEKQSKPTEKNR). Ser443 is modified (phosphoserine). Residues 445–504 (GKKEADPEDGKPVEDKVKEKAKEEDREKLGEREETIPPDYRLEEAKDKDGKPLPPKEVKE) are compositionally biased toward basic and acidic residues. The Inhibitory domain 3 repeat unit spans residues 449 to 502 (ADPEDGKPVEDKVKEKAKEEDREKLGEREETIPPDYRLEEAKDKDGKPLPPKEV). Ser519 and Ser530 each carry phosphoserine. Residues 547–723 (SQTPAPTTQA…KPKADGKSTS (177 aa)) form a disordered region. Positions 548–560 (QTPAPTTQAAGPP) are enriched in low complexity. Residues 562 to 571 (DSARDNKELD) are compositionally biased toward basic and acidic residues. Residues Ser578 and Ser580 each carry the phosphoserine modification. The stretch at 586–642 (PDPDEHKPVEDKVKEKAKAEHRDKLGERDDTIPPKYQHLLDDNKEGTPGKPKRSESP) is one Inhibitory domain 4 repeat. The span at 586–643 (PDPDEHKPVEDKVKEKAKAEHRDKLGERDDTIPPKYQHLLDDNKEGTPGKPKRSESPR) shows a compositional bias: basic and acidic residues. Polar residues predominate over residues 653-670 (NLQVPRTPLTPSQGTWTA). Residues 672 to 690 (PQLQKPQQTQQRTKTRSLL) show a composition bias toward low complexity. Over residues 701–723 (KAKDSTKAKEETSKPKADGKSTS) the composition is skewed to basic and acidic residues.

The protein belongs to the protease inhibitor I27 (calpastatin) family.

Functionally, specific inhibition of calpain (calcium-dependent cysteine protease). Plays a key role in postmortem tenderization of meat and have been proposed to be involved in muscle protein degradation in living tissue. The chain is Calpastatin (CAST) from Ovis aries (Sheep).